A 727-amino-acid polypeptide reads, in one-letter code: ATP-dependent RNA helicase DBP7 (727 aa).

The segment at 14 to 119 (PDTSSVAASK…TSHLAPTSTT (106 aa)) is disordered. Polar residues predominate over residues 15–28 (DTSSVAASKNQNVK). Positions 63 to 94 (DESKRKRDSEDKVQLDSNKRSKFTESKGENGG) are enriched in basic and acidic residues. The segment covering 99-119 (YVSSLFTNNQPTSHLAPTSTT) has biased composition (polar residues). The Q motif motif lies at 135 to 164 (TNFSGLGLNEKLSIHLTDHLRFMHPTKIQQ). The Helicase ATP-binding domain occupies 168-363 (PSLISTENDL…SIVLKDPEMI (196 aa)). Residue 181–188 (AQTGSGKT) coordinates ATP. A DEAD box motif is present at residues 295-298 (DEGD). A Helicase C-terminal domain is found at 406-613 (TLDALLLKIS…NIKSKDNKLG (208 aa)). Residues 683 to 727 (KKLGKSVGNNSNYSESKKGKKEDPRKKMLRMAKMAVKSASSEFNY) are disordered. A compositionally biased stretch (basic and acidic residues) spans 697 to 708 (ESKKGKKEDPRK).

It belongs to the DEAD box helicase family. DDX31/DBP7 subfamily.

Its subcellular location is the nucleus. It localises to the nucleolus. It carries out the reaction ATP + H2O = ADP + phosphate + H(+). Its function is as follows. ATP-binding RNA helicase involved in the biogenesis of 60S ribosomal subunits and is required for the normal formation of 25S and 5.8S rRNAs. The polypeptide is ATP-dependent RNA helicase DBP7 (DBP7) (Candida albicans (strain SC5314 / ATCC MYA-2876) (Yeast)).